We begin with the raw amino-acid sequence, 352 residues long: uncharacterized protein (352 aa).

This is an uncharacterized protein from Thermoproteus tenax (TTV1).